Reading from the N-terminus, the 81-residue chain is Alpha-toxin Ac1 (81 aa).

Residues 1-17 (YIVMISLALVVMIGVES) form the signal peptide. The LCN-type CS-alpha/beta domain occupies 19 to 80 (RDGYIVYPNN…PIKDPSQKCT (62 aa)). 4 cysteine pairs are disulfide-bonded: Cys-29-Cys-79, Cys-33-Cys-51, Cys-37-Cys-61, and Cys-41-Cys-63.

The protein belongs to the long (4 C-C) scorpion toxin superfamily. Sodium channel inhibitor family. Alpha subfamily. Expressed by the venom gland.

It localises to the secreted. Functionally, alpha toxins bind voltage-independently at site-3 of sodium channels (Nav) and inhibit the inactivation of the activated channels, thereby blocking neuronal transmission. The sequence is that of Alpha-toxin Ac1 from Androctonus crassicauda (Arabian fat-tailed scorpion).